Reading from the N-terminus, the 304-residue chain is Protoheme IX farnesyltransferase (304 aa).

The next 9 membrane-spanning stretches (helical) occupy residues 31–51 (VNTL…PDGL), 58–78 (VAAT…NCLI), 99–119 (LAPA…LTVL), 126–146 (LTMW…TVLL), 154–174 (IVIG…AVTG), 180–200 (ALLL…ALAL), 222–242 (FTRL…LLPF), 243–263 (ATRM…IGFL), and 284–304 (FSIL…YLPL).

Belongs to the UbiA prenyltransferase family. Protoheme IX farnesyltransferase subfamily.

The protein resides in the cell inner membrane. It carries out the reaction heme b + (2E,6E)-farnesyl diphosphate + H2O = Fe(II)-heme o + diphosphate. The protein operates within porphyrin-containing compound metabolism; heme O biosynthesis; heme O from protoheme: step 1/1. Its function is as follows. Converts heme B (protoheme IX) to heme O by substitution of the vinyl group on carbon 2 of heme B porphyrin ring with a hydroxyethyl farnesyl side group. The sequence is that of Protoheme IX farnesyltransferase from Aromatoleum aromaticum (strain DSM 19018 / LMG 30748 / EbN1) (Azoarcus sp. (strain EbN1)).